The primary structure comprises 381 residues: Probable serine/threonine-protein kinase PBL25 (381 aa).

Residue Cys3 is the site of S-palmitoyl cysteine attachment. A disordered region spans residues 16–41 (GSSMPAPYKQPNSPKRTTGEVVAKNA). Thr54 is subject to Phosphothreonine. The region spanning 65–342 (FRQECLIGEG…SDVITALSFL (278 aa)) is the Protein kinase domain. ATP contacts are provided by residues 71-79 (IGEGGFGRV) and Lys94. At Tyr139 the chain carries Phosphotyrosine. The Proton acceptor role is filled by Asp192. Phosphoserine is present on residues Ser196 and Ser226. Thr232 is subject to Phosphothreonine. Phosphotyrosine is present on Tyr240. The segment at 347-381 (NSSNTGSNHLQQNRSNKYQDAVQWDSSPRYANSQM) is disordered. Residues 355–381 (HLQQNRSNKYQDAVQWDSSPRYANSQM) show a composition bias toward polar residues.

The protein belongs to the protein kinase superfamily. Ser/Thr protein kinase family.

The protein resides in the cell membrane. The catalysed reaction is L-seryl-[protein] + ATP = O-phospho-L-seryl-[protein] + ADP + H(+). The enzyme catalyses L-threonyl-[protein] + ATP = O-phospho-L-threonyl-[protein] + ADP + H(+). May be involved in plant defense signaling. This is Probable serine/threonine-protein kinase PBL25 from Arabidopsis thaliana (Mouse-ear cress).